Consider the following 273-residue polypeptide: DnaJ homolog subfamily C member 27 (273 aa).

GTP-binding positions include 23–30 (GNAEVGKS), 71–75 (DMAGH), and 134–137 (NKID). In terms of domain architecture, J spans 217–273 (DSWDMLGVKPGATRDEVNKAYRKLAVLLHPDKCVAPGSEDAFKAVVNARTALLKNIK).

Belongs to the small GTPase superfamily. Rab family.

The protein resides in the nucleus. Functionally, GTPase possibly involved in regulation of the MEK/ERK pathway. The chain is DnaJ homolog subfamily C member 27 (DNAJC27) from Gallus gallus (Chicken).